The chain runs to 473 residues: Photosystem II CP43 reaction center protein (473 aa).

A propeptide spanning residues 1-14 is cleaved from the precursor; that stretch reads MKTLYSLRRFYHVE. Residue T15 is modified to N-acetylthreonine. Phosphothreonine is present on T15. 5 helical membrane-spanning segments follow: residues 69–93, 134–155, 178–200, 255–275, and 291–312; these read LFEV…PHLA, LLGP…KDRN, KALY…RKIT, KPFA…LSYS, and WFNN…ASQA. E367 serves as a coordination point for [CaMn4O5] cluster. A helical transmembrane segment spans residues 447–471; the sequence is RARAAAAGFEKGIDRDFEPVLSMTP.

The protein belongs to the PsbB/PsbC family. PsbC subfamily. In terms of assembly, PSII is composed of 1 copy each of membrane proteins PsbA, PsbB, PsbC, PsbD, PsbE, PsbF, PsbH, PsbI, PsbJ, PsbK, PsbL, PsbM, PsbT, PsbX, PsbY, PsbZ, Psb30/Ycf12, at least 3 peripheral proteins of the oxygen-evolving complex and a large number of cofactors. It forms dimeric complexes. Binds multiple chlorophylls and provides some of the ligands for the Ca-4Mn-5O cluster of the oxygen-evolving complex. It may also provide a ligand for a Cl- that is required for oxygen evolution. PSII binds additional chlorophylls, carotenoids and specific lipids. serves as cofactor.

It localises to the plastid. Its subcellular location is the chloroplast thylakoid membrane. Its function is as follows. One of the components of the core complex of photosystem II (PSII). It binds chlorophyll and helps catalyze the primary light-induced photochemical processes of PSII. PSII is a light-driven water:plastoquinone oxidoreductase, using light energy to abstract electrons from H(2)O, generating O(2) and a proton gradient subsequently used for ATP formation. The chain is Photosystem II CP43 reaction center protein from Atropa belladonna (Belladonna).